Reading from the N-terminus, the 160-residue chain is MLTHLDSQGRANMVDVTEKAVTSREATAEAVVRMRPETLQLIQDGGHPKGDVFAVARIAGIQAAKRTHELIPLCHPLLLTSVKVELQAEAPDAVRIRARCRLAGQTGVEMEALTAASVAALTIYDMCKAVDRGMLIEQVQLLEKLGGKSGHYRKEEEGQA.

Substrate-binding positions include 73-75 (LCH) and 110-111 (ME). Asp-125 is an active-site residue.

This sequence belongs to the MoaC family. As to quaternary structure, homohexamer; trimer of dimers.

The catalysed reaction is (8S)-3',8-cyclo-7,8-dihydroguanosine 5'-triphosphate = cyclic pyranopterin phosphate + diphosphate. It participates in cofactor biosynthesis; molybdopterin biosynthesis. In terms of biological role, catalyzes the conversion of (8S)-3',8-cyclo-7,8-dihydroguanosine 5'-triphosphate to cyclic pyranopterin monophosphate (cPMP). This Pseudomonas paraeruginosa (strain DSM 24068 / PA7) (Pseudomonas aeruginosa (strain PA7)) protein is Cyclic pyranopterin monophosphate synthase.